Consider the following 570-residue polypeptide: Alpha-1,2-mannosyltransferase ALG9 (570 aa).

The segment at 1 to 37 is disordered; that stretch reads MDLTTTRQRRPLISDSSSSSSTKSYSKTDKPGRSNGG. Residues 14 to 25 show a composition bias toward low complexity; the sequence is SDSSSSSSTKSY. 8 helical membrane-spanning segments follow: residues 129–149, 160–180, 208–228, 237–257, 297–317, 324–344, 349–369, and 381–401; these read AVRL…VVAL, YAVA…SFLP, VVGV…VVIY, AFIA…LVDY, FNNF…YPVI, ALLV…LQPH, FLYP…ENIP, and SLLV…ILCA. Residue N473 is glycosylated (N-linked (GlcNAc...) asparagine).

The protein belongs to the glycosyltransferase 22 family.

It localises to the endoplasmic reticulum membrane. It catalyses the reaction an alpha-D-Man-(1-&gt;2)-alpha-D-Man-(1-&gt;2)-alpha-D-Man-(1-&gt;3)-[alpha-D-Man-(1-&gt;3)-alpha-D-Man-(1-&gt;6)]-beta-D-Man-(1-&gt;4)-beta-D-GlcNAc-(1-&gt;4)-alpha-D-GlcNAc-diphospho-di-trans,poly-cis-dolichol + a di-trans,poly-cis-dolichyl beta-D-mannosyl phosphate = an alpha-D-Man-(1-&gt;2)-alpha-D-Man-(1-&gt;2)-alpha-D-Man-(1-&gt;3)-[alpha-D-Man-(1-&gt;2)-alpha-D-Man-(1-&gt;3)-alpha-D-Man-(1-&gt;6)]-beta-D-Man-(1-&gt;4)-beta-D-GlcNAc-(1-&gt;4)-alpha-D-GlcNAc-diphospho-di-trans,poly-cis-dolichol + a di-trans,poly-cis-dolichyl phosphate + H(+). The catalysed reaction is an alpha-D-Man-(1-&gt;2)-alpha-D-Man-(1-&gt;2)-alpha-D-Man-(1-&gt;3)-[alpha-D-Man-(1-&gt;2)-alpha-D-Man-(1-&gt;3)-[alpha-D-Man-(1-&gt;6)]-alpha-D-Man-(1-&gt;6)]-beta-D-Man-(1-&gt;4)-beta-D-GlcNAc-(1-&gt;4)-alpha-D-GlcNAc-diphospho-di-trans,poly-cis-dolichol + a di-trans,poly-cis-dolichyl beta-D-mannosyl phosphate = an alpha-D-Man-(1-&gt;2)-alpha-D-Man-(1-&gt;2)-alpha-D-Man-(1-&gt;3)-[alpha-D-Man-(1-&gt;2)-alpha-D-Man-(1-&gt;3)-[alpha-D-Man-(1-&gt;2)-alpha-D-Man-(1-&gt;6)]-alpha-D-Man-(1-&gt;6)]-beta-D-Man-(1-&gt;4)-beta-D-GlcNAc-(1-&gt;4)-alpha-D-GlcNAc-diphospho-di-trans,poly-cis-dolichol + a di-trans,poly-cis-dolichyl phosphate + H(+). It functions in the pathway protein modification; protein glycosylation. Its function is as follows. Mannosyltransferase that operates in the biosynthetic pathway of dolichol-linked oligosaccharides, the glycan precursors employed in protein asparagine (N)-glycosylation. The assembly of dolichol-linked oligosaccharides begins on the cytosolic side of the endoplasmic reticulum membrane and finishes in its lumen. The sequential addition of sugars to dolichol pyrophosphate produces dolichol-linked oligosaccharides containing fourteen sugars, including two GlcNAcs, nine mannoses and three glucoses. Once assembled, the oligosaccharide is transferred from the lipid to nascent proteins by oligosaccharyltransferases. In the lumen of the endoplasmic reticulum, catalyzes the addition of the seventh and ninth alpha-1,2-linked mannose residues to Man(6)GlcNAc(2)-PP-dolichol and Man(8)GlcNAc(2)-PP-dolichol respectively. This Arabidopsis thaliana (Mouse-ear cress) protein is Alpha-1,2-mannosyltransferase ALG9 (ALG9).